A 253-amino-acid chain; its full sequence is Glutamate racemase (253 aa).

Substrate is bound by residues 7-8 and 39-40; these read DS and YG. The active-site Proton donor/acceptor is the Cys-70. A substrate-binding site is contributed by 71-72; the sequence is NT. Cys-180 serves as the catalytic Proton donor/acceptor. 181–182 is a substrate binding site; sequence TH.

This sequence belongs to the aspartate/glutamate racemases family.

It carries out the reaction L-glutamate = D-glutamate. Its pathway is cell wall biogenesis; peptidoglycan biosynthesis. Functionally, provides the (R)-glutamate required for cell wall biosynthesis. The chain is Glutamate racemase from Halothermothrix orenii (strain H 168 / OCM 544 / DSM 9562).